Here is a 476-residue protein sequence, read N- to C-terminus: Aspartyl/glutamyl-tRNA(Asn/Gln) amidotransferase subunit B (476 aa).

This sequence belongs to the GatB/GatE family. GatB subfamily. Heterotrimer of A, B and C subunits.

The catalysed reaction is L-glutamyl-tRNA(Gln) + L-glutamine + ATP + H2O = L-glutaminyl-tRNA(Gln) + L-glutamate + ADP + phosphate + H(+). It catalyses the reaction L-aspartyl-tRNA(Asn) + L-glutamine + ATP + H2O = L-asparaginyl-tRNA(Asn) + L-glutamate + ADP + phosphate + 2 H(+). Its function is as follows. Allows the formation of correctly charged Asn-tRNA(Asn) or Gln-tRNA(Gln) through the transamidation of misacylated Asp-tRNA(Asn) or Glu-tRNA(Gln) in organisms which lack either or both of asparaginyl-tRNA or glutaminyl-tRNA synthetases. The reaction takes place in the presence of glutamine and ATP through an activated phospho-Asp-tRNA(Asn) or phospho-Glu-tRNA(Gln). The chain is Aspartyl/glutamyl-tRNA(Asn/Gln) amidotransferase subunit B from Solidesulfovibrio magneticus (strain ATCC 700980 / DSM 13731 / RS-1) (Desulfovibrio magneticus).